Consider the following 258-residue polypeptide: Probable parvulin-type peptidyl-prolyl cis-trans isomerase (258 aa).

The signal sequence occupies residues 1 to 19 (MKRIAMLAAACVIAVPAFA). A PpiC domain is found at 127 to 219 (KMEYKVRHIL…FGWHVIQVDD (93 aa)). Residues 158–175 (DDLAKKNSKDPGSAERGG) show a composition bias toward basic and acidic residues. Positions 158 to 178 (DDLAKKNSKDPGSAERGGDLG) are disordered.

The protein belongs to the PpiC/parvulin rotamase family.

The enzyme catalyses [protein]-peptidylproline (omega=180) = [protein]-peptidylproline (omega=0). This is Probable parvulin-type peptidyl-prolyl cis-trans isomerase from Bordetella bronchiseptica (strain ATCC BAA-588 / NCTC 13252 / RB50) (Alcaligenes bronchisepticus).